The primary structure comprises 50 residues: Cytochrome c-555 (50 aa).

4 residues coordinate heme: Cys-7, Cys-10, His-11, and Met-25.

Binds 1 heme group per subunit.

It localises to the cell membrane. This chain is Cytochrome c-555, found in Schinkia azotoformans (Bacillus azotoformans).